A 446-amino-acid polypeptide reads, in one-letter code: MITIKKGLDLPIAGKPEQVIHNGNAVKEVALLGEEYVGMRPSMKVREGDVVKKGQVLFEDKKNPGIVFTAPASGTVTAINRGAKRVLQSVVIKVEGNEQITFTQYNEDELKKLTSEQVRQNLQSSGLWTALRTRPFSKVPASDAVPSSIFVNAMDTNPLSANPEIVLKEHWQDFTDGLTVLSRLHEGKLHLCKAGDSNIPTIDLPNLAVHDFSGPHPAGLSGTHIHFIDPVSATKSVWYLNYQDVIAIGKLFTTGEIYTDRVVSLAGPQVKNPRLIRTQLGANLSHLTENELSAGENRVISGSVLSGNTAIGPYNYLGRYALQVSVIAEGREKEFLGWIMPGKNKFSITRTVLGHFSSKLFNFTSAVNGGHRAMVPIGAYERVVPLDIIPTLLLRDLASGDTDSAQALGCLELDEEDLALCTFVCPGKNEYGPMLRAALDKIEKEG.

The protein belongs to the NqrA family. As to quaternary structure, composed of six subunits; NqrA, NqrB, NqrC, NqrD, NqrE and NqrF.

The catalysed reaction is a ubiquinone + n Na(+)(in) + NADH + H(+) = a ubiquinol + n Na(+)(out) + NAD(+). Its function is as follows. NQR complex catalyzes the reduction of ubiquinone-1 to ubiquinol by two successive reactions, coupled with the transport of Na(+) ions from the cytoplasm to the periplasm. NqrA to NqrE are probably involved in the second step, the conversion of ubisemiquinone to ubiquinol. The protein is Na(+)-translocating NADH-quinone reductase subunit A of Histophilus somni (strain 2336) (Haemophilus somnus).